We begin with the raw amino-acid sequence, 227 residues long: ATP-dependent dethiobiotin synthetase BioD (227 aa).

13–18 (DIGKTY) provides a ligand contact to ATP. Residue threonine 17 participates in Mg(2+) binding. The active site involves lysine 38. Serine 42 lines the substrate pocket. ATP contacts are provided by residues aspartate 55, 116-119 (EGSG), and 179-180 (NN). Residues aspartate 55 and glutamate 116 each contribute to the Mg(2+) site.

The protein belongs to the dethiobiotin synthetase family. Homodimer. It depends on Mg(2+) as a cofactor.

It localises to the cytoplasm. It carries out the reaction (7R,8S)-7,8-diammoniononanoate + CO2 + ATP = (4R,5S)-dethiobiotin + ADP + phosphate + 3 H(+). Its pathway is cofactor biosynthesis; biotin biosynthesis; biotin from 7,8-diaminononanoate: step 1/2. Its function is as follows. Catalyzes a mechanistically unusual reaction, the ATP-dependent insertion of CO2 between the N7 and N8 nitrogen atoms of 7,8-diaminopelargonic acid (DAPA, also called 7,8-diammoniononanoate) to form a ureido ring. The sequence is that of ATP-dependent dethiobiotin synthetase BioD from Clostridium botulinum (strain Eklund 17B / Type B).